We begin with the raw amino-acid sequence, 251 residues long: Ubiquinone/menaquinone biosynthesis C-methyltransferase UbiE (251 aa).

S-adenosyl-L-methionine is bound by residues threonine 74, aspartate 95, and 123–124 (NA).

The protein belongs to the class I-like SAM-binding methyltransferase superfamily. MenG/UbiE family.

The catalysed reaction is a 2-demethylmenaquinol + S-adenosyl-L-methionine = a menaquinol + S-adenosyl-L-homocysteine + H(+). It carries out the reaction a 2-methoxy-6-(all-trans-polyprenyl)benzene-1,4-diol + S-adenosyl-L-methionine = a 5-methoxy-2-methyl-3-(all-trans-polyprenyl)benzene-1,4-diol + S-adenosyl-L-homocysteine + H(+). Its pathway is quinol/quinone metabolism; menaquinone biosynthesis; menaquinol from 1,4-dihydroxy-2-naphthoate: step 2/2. It participates in cofactor biosynthesis; ubiquinone biosynthesis. Its function is as follows. Methyltransferase required for the conversion of demethylmenaquinol (DMKH2) to menaquinol (MKH2) and the conversion of 2-polyprenyl-6-methoxy-1,4-benzoquinol (DDMQH2) to 2-polyprenyl-3-methyl-6-methoxy-1,4-benzoquinol (DMQH2). The polypeptide is Ubiquinone/menaquinone biosynthesis C-methyltransferase UbiE (Marinomonas sp. (strain MWYL1)).